The primary structure comprises 281 residues: Acetyl-coenzyme A carboxylase carboxyl transferase subunit beta (281 aa).

In terms of domain architecture, CoA carboxyltransferase N-terminal spans 23–281 (LWSKCEDCGA…KTLAMMRVEG (259 aa)). The Zn(2+) site is built by C27, C30, C46, and C49. The segment at 27–49 (CEDCGAMLHRRQLEENLNTCNEC) adopts a C4-type zinc-finger fold.

The protein belongs to the AccD/PCCB family. In terms of assembly, acetyl-CoA carboxylase is a heterohexamer composed of biotin carboxyl carrier protein (AccB), biotin carboxylase (AccC) and two subunits each of ACCase subunit alpha (AccA) and ACCase subunit beta (AccD). The cofactor is Zn(2+).

The protein localises to the cytoplasm. It catalyses the reaction N(6)-carboxybiotinyl-L-lysyl-[protein] + acetyl-CoA = N(6)-biotinyl-L-lysyl-[protein] + malonyl-CoA. The protein operates within lipid metabolism; malonyl-CoA biosynthesis; malonyl-CoA from acetyl-CoA: step 1/1. In terms of biological role, component of the acetyl coenzyme A carboxylase (ACC) complex. Biotin carboxylase (BC) catalyzes the carboxylation of biotin on its carrier protein (BCCP) and then the CO(2) group is transferred by the transcarboxylase to acetyl-CoA to form malonyl-CoA. The sequence is that of Acetyl-coenzyme A carboxylase carboxyl transferase subunit beta from Chlorobium luteolum (strain DSM 273 / BCRC 81028 / 2530) (Pelodictyon luteolum).